The chain runs to 254 residues: Ditrans,polycis-undecaprenyl-diphosphate synthase ((2E,6E)-farnesyl-diphosphate specific) (254 aa).

Asp25 is a catalytic residue. Asp25 serves as a coordination point for Mg(2+). Residues 26–29, Trp30, Arg38, His42, and 70–72 each bind substrate; these read GNGR and SSE. Asn73 functions as the Proton acceptor in the catalytic mechanism. Substrate-binding residues include Trp74, Arg76, and Arg193. His198 lines the Mg(2+) pocket. 199 to 201 lines the substrate pocket; it reads RIS. A Mg(2+)-binding site is contributed by Glu212.

This sequence belongs to the UPP synthase family. In terms of assembly, homodimer. It depends on Mg(2+) as a cofactor.

It carries out the reaction 8 isopentenyl diphosphate + (2E,6E)-farnesyl diphosphate = di-trans,octa-cis-undecaprenyl diphosphate + 8 diphosphate. Catalyzes the sequential condensation of isopentenyl diphosphate (IPP) with (2E,6E)-farnesyl diphosphate (E,E-FPP) to yield (2Z,6Z,10Z,14Z,18Z,22Z,26Z,30Z,34E,38E)-undecaprenyl diphosphate (di-trans,octa-cis-UPP). UPP is the precursor of glycosyl carrier lipid in the biosynthesis of bacterial cell wall polysaccharide components such as peptidoglycan and lipopolysaccharide. The polypeptide is Ditrans,polycis-undecaprenyl-diphosphate synthase ((2E,6E)-farnesyl-diphosphate specific) (Photorhabdus laumondii subsp. laumondii (strain DSM 15139 / CIP 105565 / TT01) (Photorhabdus luminescens subsp. laumondii)).